A 445-amino-acid polypeptide reads, in one-letter code: tRNA-2-methylthio-N(6)-dimethylallyladenosine synthase (445 aa).

In terms of domain architecture, MTTase N-terminal spans 7-121 (KTFYIETFGC…LPEMLVQLEA (115 aa)). [4Fe-4S] cluster contacts are provided by Cys-16, Cys-52, Cys-84, Cys-158, Cys-162, and Cys-165. In terms of domain architecture, Radical SAM core spans 144–374 (RDNPHRAYLT…QEKQRAIQIR (231 aa)). The TRAM domain occupies 377-443 (AEMIGSIQEV…PNSLVGESAA (67 aa)).

It belongs to the methylthiotransferase family. MiaB subfamily. As to quaternary structure, monomer. [4Fe-4S] cluster serves as cofactor.

Its subcellular location is the cytoplasm. It carries out the reaction N(6)-dimethylallyladenosine(37) in tRNA + (sulfur carrier)-SH + AH2 + 2 S-adenosyl-L-methionine = 2-methylsulfanyl-N(6)-dimethylallyladenosine(37) in tRNA + (sulfur carrier)-H + 5'-deoxyadenosine + L-methionine + A + S-adenosyl-L-homocysteine + 2 H(+). Functionally, catalyzes the methylthiolation of N6-(dimethylallyl)adenosine (i(6)A), leading to the formation of 2-methylthio-N6-(dimethylallyl)adenosine (ms(2)i(6)A) at position 37 in tRNAs that read codons beginning with uridine. The protein is tRNA-2-methylthio-N(6)-dimethylallyladenosine synthase of Solibacter usitatus (strain Ellin6076).